Reading from the N-terminus, the 280-residue chain is Fructose-1,6-bisphosphatase class 1 (280 aa).

E64, D83, L85, and D86 together coordinate Mg(2+). Substrate is bound by residues 86–89, Y189, and K220; that span reads DGSS. E226 contacts Mg(2+).

It belongs to the FBPase class 1 family. As to quaternary structure, homotetramer. Mg(2+) is required as a cofactor.

The protein localises to the cytoplasm. It carries out the reaction beta-D-fructose 1,6-bisphosphate + H2O = beta-D-fructose 6-phosphate + phosphate. It participates in carbohydrate biosynthesis; gluconeogenesis. The chain is Fructose-1,6-bisphosphatase class 1 from Campylobacter jejuni subsp. jejuni serotype O:23/36 (strain 81-176).